We begin with the raw amino-acid sequence, 477 residues long: MSIPRLKSYLMMFAAVLMLGQVLTAQAEEALPDFTTLVEQASPAVVNISTKQKLPDRRIAAGQMPDLEGLPPMFREFFERNMPQQPRSPRGDRQREAQSLGSGFIISSDGYVLTNNHVVADADEIIVRLSDRSELQAKLVGTDPRTDVALLKVDGKNLPTVKLGDSEKLKVGEWVLAIGSPFGFDHSVTKGIVSAKGRTLPNDTYVPFIQTDVAINPGNSGGPLFNMKGEVVGINSQIFTRSGGFMGLSFAIPIDVAIDVSNQLKKDGKVSRGWLGVVIQEVNKDLAESFGLDKPAGALVAQVLENGPAAKGGLQVGDVILSMNGQPIVMSADLPHLVGGLKDGEKAKLEIIRNGKRQNLDISVGALPDDDVEIGAGTEGGAERSSNRLGVSVADLTAEQKKSLELKGGVVIKEVQDGPAAMIGLRPGDVISHLNNQAIGSAKEFTEIAKELPKNRSVSMRVLRQGRASFITFKLAE.

The N-terminal stretch at 1–27 is a signal peptide; that stretch reads MSIPRLKSYLMMFAAVLMLGQVLTAQA. Catalysis depends on charge relay system residues His117, Asp147, and Ser220. Substrate-binding positions include 218-220 and 275-279; these read GNS and LGVVI. PDZ domains follow at residues 264 to 355 and 361 to 466; these read LKKD…IRNG and DISV…LRQG.

This sequence belongs to the peptidase S1C family.

The protein resides in the periplasm. The enzyme catalyses Acts on substrates that are at least partially unfolded. The cleavage site P1 residue is normally between a pair of hydrophobic residues, such as Val-|-Val.. Functionally, might be efficient in the degradation of transiently denatured and unfolded proteins which accumulate in the periplasm following stress conditions. The sequence is that of Probable periplasmic serine endoprotease DegP-like from Pseudomonas putida (strain ATCC 700007 / DSM 6899 / JCM 31910 / BCRC 17059 / LMG 24140 / F1).